Here is a 359-residue protein sequence, read N- to C-terminus: Type II restriction enzyme HgiDI (359 aa).

It catalyses the reaction Endonucleolytic cleavage of DNA to give specific double-stranded fragments with terminal 5'-phosphates.. A P subtype restriction enzyme that recognizes the double-stranded sequence 5'-GRCGYC-3' and cleaves after R-2. The polypeptide is Type II restriction enzyme HgiDI (Herpetosiphon aurantiacus (Herpetosiphon giganteus)).